The following is a 113-amino-acid chain: Prefoldin subunit beta (113 aa).

It belongs to the prefoldin subunit beta family. Heterohexamer of two alpha and four beta subunits.

It is found in the cytoplasm. Functionally, molecular chaperone capable of stabilizing a range of proteins. Seems to fulfill an ATP-independent, HSP70-like function in archaeal de novo protein folding. The polypeptide is Prefoldin subunit beta (Methanococcus maripaludis (strain C7 / ATCC BAA-1331)).